The sequence spans 161 residues: Ribosome maturation factor RimP (161 aa).

The protein belongs to the RimP family.

It localises to the cytoplasm. Required for maturation of 30S ribosomal subunits. This Rickettsia africae (strain ESF-5) protein is Ribosome maturation factor RimP.